Consider the following 180-residue polypeptide: MSRLKKLYTEEIRKTLQDKFQYENVMQIPVLKKIVISMGLAEAAKDKNLFQAHLEELAVISGQKPLVTRAKNSIAGFKLREGQGIGAKVTLRGIRMYDFMDRFCNIVSPRIRDFRGFSCKGDGRGCYSLGLDDQQIFPEVDLDRVKRSQGMNITWVTTAQTDAECLTLLECMGLRFKKAQ.

It belongs to the universal ribosomal protein uL5 family. In terms of assembly, part of the 50S ribosomal subunit; part of the 5S rRNA/L5/L18/L25 subcomplex. Contacts the 5S rRNA and the P site tRNA. Forms a bridge to the 30S subunit in the 70S ribosome.

Its function is as follows. This is one of the proteins that bind and probably mediate the attachment of the 5S RNA into the large ribosomal subunit, where it forms part of the central protuberance. In the 70S ribosome it contacts protein S13 of the 30S subunit (bridge B1b), connecting the 2 subunits; this bridge is implicated in subunit movement. Contacts the P site tRNA; the 5S rRNA and some of its associated proteins might help stabilize positioning of ribosome-bound tRNAs. The sequence is that of Large ribosomal subunit protein uL5 from Chlamydia trachomatis serovar L2 (strain ATCC VR-902B / DSM 19102 / 434/Bu).